The chain runs to 174 residues: MESQVRQNFHKDCEAAINRQINLELYASYSYLSMAYYFDRDDVALPGFAHFFKHQSEEEREHAEKLMKQQNQRGGRIFLQDVKKPDRDEWGSGLDALECALQLEKNVNQSLLDLHKVCSEHNDPHMCDFLETHYLDEQVKSIKELGDWVTNLRRLGAPQNGMAEYLFDKHTLGK.

Residues 7–156 enclose the Ferritin-like diiron domain; that stretch reads QNFHKDCEAA…DWVTNLRRLG (150 aa). Fe cation contacts are provided by Glu24, Glu59, His62, Glu104, and Gln138.

It belongs to the ferritin family. As to quaternary structure, in liver, forms a heteromer consisting of middle and heavy subunits. The functional molecule forms a roughly spherical shell with a diameter of 12 nm and contains a central cavity into which the insoluble mineral iron core is deposited. In terms of tissue distribution, liver (at protein level).

It carries out the reaction 4 Fe(2+) + O2 + 4 H(+) = 4 Fe(3+) + 2 H2O. Its function is as follows. Stores iron in a soluble, non-toxic, readily available form. Important for iron homeostasis. Has ferroxidase activity. Iron is taken up in the ferrous form and deposited as ferric hydroxides after oxidation. Also plays a role in delivery of iron to cells. Mediates iron uptake in capsule cells of the developing kidney. Delivery to lysosomes is mediated by the cargo receptor NCOA4 for autophagic degradation and release of iron. In Trematomus newnesi (Dusky notothen), this protein is Ferritin, heavy subunit.